A 427-amino-acid chain; its full sequence is Serine hydroxymethyltransferase (427 aa).

Residues Leu124 and 128–130 (GHL) each bind (6S)-5,6,7,8-tetrahydrofolate. Lys233 is subject to N6-(pyridoxal phosphate)lysine.

This sequence belongs to the SHMT family. As to quaternary structure, homodimer. Requires pyridoxal 5'-phosphate as cofactor.

Its subcellular location is the cytoplasm. It catalyses the reaction (6R)-5,10-methylene-5,6,7,8-tetrahydrofolate + glycine + H2O = (6S)-5,6,7,8-tetrahydrofolate + L-serine. It functions in the pathway one-carbon metabolism; tetrahydrofolate interconversion. It participates in amino-acid biosynthesis; glycine biosynthesis; glycine from L-serine: step 1/1. Its function is as follows. Catalyzes the reversible interconversion of serine and glycine with tetrahydrofolate (THF) serving as the one-carbon carrier. This reaction serves as the major source of one-carbon groups required for the biosynthesis of purines, thymidylate, methionine, and other important biomolecules. Also exhibits THF-independent aldolase activity toward beta-hydroxyamino acids, producing glycine and aldehydes, via a retro-aldol mechanism. The sequence is that of Serine hydroxymethyltransferase from Acidothermus cellulolyticus (strain ATCC 43068 / DSM 8971 / 11B).